We begin with the raw amino-acid sequence, 348 residues long: Photosystem II protein D1 (348 aa).

Helical transmembrane passes span 33–50, 122–137, and 146–160; these read YIGWFGILMFPLLVLATV, HFILGAGAYMGREWEF, and WIFVAFSAPLVAASA. His-122 contributes to the chlorophyll a binding site. Tyr-130 provides a ligand contact to pheophytin a. [CaMn4O5] cluster is bound by residues Asp-174 and Glu-193. Residues 201 to 222 form a helical membrane-spanning segment; the sequence is FHILGVAAVFGGSLFSAMHGSL. His-202 lines the chlorophyll a pocket. A quinone is bound by residues His-219 and 268–269; that span reads SF. His-219 lines the Fe cation pocket. Position 276 (His-276) interacts with Fe cation. The chain crosses the membrane as a helical span at residues 278–292; that stretch reads FLAAWPVIGIWFTAL. [CaMn4O5] cluster is bound by residues His-336, Glu-337, Asp-346, and Ala-348.

This sequence belongs to the reaction center PufL/M/PsbA/D family. In terms of assembly, PSII is composed of 1 copy each of membrane proteins PsbA, PsbB, PsbC, PsbD, PsbE, PsbF, PsbH, PsbI, PsbJ, PsbK, PsbL, PsbM, PsbT, PsbX, PsbY, PsbZ, Psb30/Ycf12, at least 3 peripheral proteins of the oxygen-evolving complex and a large number of cofactors. It forms dimeric complexes. It depends on The D1/D2 heterodimer binds P680, chlorophylls that are the primary electron donor of PSII, and subsequent electron acceptors. It shares a non-heme iron and each subunit binds pheophytin, quinone, additional chlorophylls, carotenoids and lipids. D1 provides most of the ligands for the Mn4-Ca-O5 cluster of the oxygen-evolving complex (OEC). There is also a Cl(-1) ion associated with D1 and D2, which is required for oxygen evolution. The PSII complex binds additional chlorophylls, carotenoids and specific lipids. as a cofactor. Tyr-165 forms a radical intermediate that is referred to as redox-active TyrZ, YZ or Y-Z.

It localises to the plastid. Its subcellular location is the chloroplast thylakoid membrane. It catalyses the reaction 2 a plastoquinone + 4 hnu + 2 H2O = 2 a plastoquinol + O2. In terms of biological role, photosystem II (PSII) is a light-driven water:plastoquinone oxidoreductase that uses light energy to abstract electrons from H(2)O, generating O(2) and a proton gradient subsequently used for ATP formation. It consists of a core antenna complex that captures photons, and an electron transfer chain that converts photonic excitation into a charge separation. The D1/D2 (PsbA/PsbD) reaction center heterodimer binds P680, the primary electron donor of PSII as well as several subsequent electron acceptors. The polypeptide is Photosystem II protein D1 (Heterocapsa pygmaea (Dinoflagellate)).